We begin with the raw amino-acid sequence, 95 residues long: Alpha-bungarotoxin isoform V31 (95 aa).

The signal sequence occupies residues 1–21 (MKTLLLTLVVVTIVCLDLGYT). Intrachain disulfides connect Cys24–Cys44, Cys37–Cys65, Cys50–Cys54, Cys69–Cys80, and Cys81–Cys86.

The protein belongs to the three-finger toxin family. Long-chain subfamily. Type II alpha-neurotoxin sub-subfamily. In terms of assembly, monomer in solution, homodimer in crystal state. Expressed by the venom gland.

The protein localises to the secreted. Its function is as follows. Binds with high affinity to muscular (alpha-1/CHRNA1) and neuronal (alpha-7/CHRNA7) nicotinic acetylcholine receptor (nAChR) and inhibits acetylcholine from binding to the receptor, thereby impairing neuromuscular and neuronal transmission. This chain is Alpha-bungarotoxin isoform V31, found in Bungarus multicinctus (Many-banded krait).